The primary structure comprises 157 residues: Ribosome maturation factor RimP (157 aa).

The protein belongs to the RimP family.

The protein resides in the cytoplasm. Its function is as follows. Required for maturation of 30S ribosomal subunits. In Synechococcus sp. (strain JA-3-3Ab) (Cyanobacteria bacterium Yellowstone A-Prime), this protein is Ribosome maturation factor RimP.